The chain runs to 341 residues: Twinfilin-2 (341 aa).

2 ADF-H domains span residues Ala-1–Ser-131 and Gly-169–His-305. Position 6 is an N6-acetyllysine (Lys-6). Tyr-301 is subject to Phosphotyrosine. A disordered region spans residues Ala-314–Ser-341. A compositionally biased stretch (basic residues) spans Gly-322–Ile-331. At Ser-341 the chain carries Phosphoserine.

It belongs to the actin-binding proteins ADF family. Twinfilin subfamily. In terms of assembly, interacts with G-actin; ADP-actin form and capping protein (CP). May also be able to interact with TWF1 and phosphoinositides, PI(4,5)P2. When bound to PI(4,5)P2, it is down-regulated. Interacts with MYO7A. Phosphorylated on both serine and threonine residues.

The protein resides in the cytoplasm. The protein localises to the cytoskeleton. It is found in the perinuclear region. It localises to the cell projection. Its subcellular location is the stereocilium. Functionally, actin-binding protein involved in motile and morphological processes. Inhibits actin polymerization, likely by sequestering G-actin. By capping the barbed ends of filaments, it also regulates motility. Seems to play an important role in clathrin-mediated endocytosis and distribution of endocytic organelles. May play a role in regulating the mature length of the middle and short rows of stereocilia. The sequence is that of Twinfilin-2 (TWF2) from Pongo abelii (Sumatran orangutan).